Reading from the N-terminus, the 103-residue chain is Large ribosomal subunit protein bL21 (103 aa).

Belongs to the bacterial ribosomal protein bL21 family. In terms of assembly, part of the 50S ribosomal subunit. Contacts protein L20.

Functionally, this protein binds to 23S rRNA in the presence of protein L20. The protein is Large ribosomal subunit protein bL21 of Colwellia psychrerythraea (strain 34H / ATCC BAA-681) (Vibrio psychroerythus).